The following is a 194-amino-acid chain: Clathrin light chain (194 aa).

Residues 44 to 156 (TTFDNSNNNN…TDSTSGNTTH (113 aa)) are disordered. Residues 48-65 (NSNNNNNNNNHNNNSYNS) show a composition bias toward low complexity. Composition is skewed to basic and acidic residues over residues 89 to 115 (EYLEKHEKEMQEKKKKSEEKRQKKIAE) and 124 to 146 (YSEREAKKKTALKNNRDHNKSLE). A required for binding clathrin heavy chain, localization to punctae, and for cytokinesis and fruiting body development region spans residues 124–194 (YSEREAKKKT…LIRLKNQPIV (71 aa)). The segment covering 147–156 (TDSTSGNTTH) has biased composition (polar residues).

This sequence belongs to the clathrin light chain family. As to quaternary structure, clathrin coats are formed from molecules containing 3 heavy chains and 3 light chains.

It localises to the cytoplasmic vesicle membrane. The protein resides in the membrane. Its subcellular location is the coated pit. Functionally, clathrin is the major protein of the polyhedral coat of coated pits and vesicles. The sequence is that of Clathrin light chain (clc) from Dictyostelium discoideum (Social amoeba).